Consider the following 168-residue polypeptide: Ribosome-binding factor A (168 aa).

Residues 122-136 (VRRDARPAGDDDPYR) are compositionally biased toward basic and acidic residues. The disordered stretch occupies residues 122–168 (VRRDARPAGDDDPYRRPRPAAGEVDELSEVDELSEVDEYGGTARQEG). Residues 144–159 (EVDELSEVDELSEVDE) show a composition bias toward acidic residues.

The protein belongs to the RbfA family. As to quaternary structure, monomer. Binds 30S ribosomal subunits, but not 50S ribosomal subunits or 70S ribosomes.

The protein localises to the cytoplasm. Functionally, one of several proteins that assist in the late maturation steps of the functional core of the 30S ribosomal subunit. Associates with free 30S ribosomal subunits (but not with 30S subunits that are part of 70S ribosomes or polysomes). Required for efficient processing of 16S rRNA. May interact with the 5'-terminal helix region of 16S rRNA. In Frankia casuarinae (strain DSM 45818 / CECT 9043 / HFP020203 / CcI3), this protein is Ribosome-binding factor A.